Consider the following 856-residue polypeptide: MSREVLPNNVTPLHYDITLEPNFRAFTFEGSLKIDLQINDHSINSVQINYLEIDFHSARIEGVNAIEVNKNENQQKATLVFPNGTFENLGPSAKLEIIFSGILNDQMAGFYRAKYTDKVTGETKYMATTQMEATDARRAFPCFDEPNLKATFAVTLVSESFLTHLSNMDVRNETIKEGKKYTTFNTTPKMSTYLVAFIVADLRYVESNNFRIPVRVYSTPGDEKFGQFAANLAARTLRFFEDTFNIEYPLPKMDMVAVHEFSAGAMENWGLVTYRVIDLLLDIENSSLDRIQRVAEVIQHELAHQWFGNLVTMDWWEGLWLNEGFATWMSWYSCNKFQPEWKVWEQYVTDNLQRALNLDSLRSSHPIEVPVNNADEINQIFDAISYSKGSSLLRMISKWLGEETFIKGVSQYLNKFKYGNAKTGDLWDALADASGKDVCSVMNIWTKRVGFPVLSVKEHKNKITLTQHRYLSTGDVKEEEDTTIYPILLALKDSTGIDNTLVLNEKSATFELKNEEFFKINGDQSGIFITSYSDERWAKLSKQANLLSVEDRVGLVADAKALSASGYTSTTNFLNLISNWKNEDSFVVWEQIINSLSALKSTWVFEPEDILNALDKFTLDLVLNKLSELGWNIGEDDSFAIQRLKVTLFSAACTSGNEKMQSIAVEMFEEYANGNKQAIPALFKAVVFNTVARLGGENNYEKIFNIYQNPVSSEEKIIALRALGRFEDKELLERTLSYLLDGTVLNQDFYIPMQGIRVHKKGIERLWAWMQEHWDEIAKRLQPGSPVLGGVLTLGLTNFTSFEALEKISAFYSRKVTKGFDQTLAQALDTIRSKAQWVSRDREIVATYLREHEYDQ.

Residues Glu132 and 264–268 (GAMEN) each bind substrate. Residue His300 coordinates Zn(2+). The Proton acceptor role is filled by Glu301. Residues His304 and Glu323 each coordinate Zn(2+).

It belongs to the peptidase M1 family. Zn(2+) serves as cofactor.

In terms of biological role, positive effector of glycogen accumulation. May be involved in nutrient-sensing. The chain is Alanine/arginine aminopeptidase (AAP1) from Saccharomyces cerevisiae (strain ATCC 204508 / S288c) (Baker's yeast).